The following is a 313-amino-acid chain: Isoaspartyl peptidase (313 aa).

The Nucleophile role is filled by Thr-179. Residues Arg-207–Asp-210 and Thr-230–Gly-233 contribute to the substrate site.

This sequence belongs to the Ntn-hydrolase family. In terms of assembly, heterotetramer of two alpha and two beta chains arranged as a dimer of alpha/beta heterodimers. In terms of processing, autocleaved. Generates the alpha and beta subunits. The beta subunit is thought to be responsible for the nucleophile hydrolase activity.

The enzyme catalyses Cleavage of a beta-linked Asp residue from the N-terminus of a polypeptide.. In terms of biological role, degrades proteins damaged by L-isoaspartyl residue formation (also known as beta-Asp residues). Degrades L-isoaspartyl-containing di- and tripeptides. Acts best on iso-Asp-Leu, followed by iso-Asp-Ala, -His and to a lesser extent iso-Asp-Lys, -Phe and iso-Asp-Leu-Ala. Does not act on internal iso-Asp bonds (Als-iso-Asp-Leu-Ala). Does not act on alpha-Asp bonds. Has poor L-asparaginase activity. The chain is Isoaspartyl peptidase (iaaA) from Salmonella typhimurium (strain LT2 / SGSC1412 / ATCC 700720).